The sequence spans 184 residues: Endoribonuclease YbeY (184 aa).

Acidic residues-rich tracts occupy residues Met1–Pro11 and Asp19–Asp29. Positions Met1–Asp38 are disordered. Zn(2+) contacts are provided by His146, His150, and His156.

It belongs to the endoribonuclease YbeY family. The cofactor is Zn(2+).

It is found in the cytoplasm. Single strand-specific metallo-endoribonuclease involved in late-stage 70S ribosome quality control and in maturation of the 3' terminus of the 16S rRNA. This Burkholderia pseudomallei (strain K96243) protein is Endoribonuclease YbeY.